A 331-amino-acid polypeptide reads, in one-letter code: L-lactate dehydrogenase A chain (331 aa).

Residues glycine 29 to lysine 57 and arginine 98 each bind NAD(+). Substrate-binding residues include arginine 105, asparagine 137, and arginine 168. Asparagine 137 contacts NAD(+). Histidine 192 serves as the catalytic Proton acceptor. Residue threonine 247 participates in substrate binding.

It belongs to the LDH/MDH superfamily. LDH family. As to quaternary structure, homotetramer.

The protein resides in the cytoplasm. It catalyses the reaction (S)-lactate + NAD(+) = pyruvate + NADH + H(+). It functions in the pathway fermentation; pyruvate fermentation to lactate; (S)-lactate from pyruvate: step 1/1. Its function is as follows. Interconverts simultaneously and stereospecifically pyruvate and lactate with concomitant interconversion of NADH and NAD(+). The protein is L-lactate dehydrogenase A chain (ldha) of Gobionotothen gibberifrons (Humped rockcod).